A 363-amino-acid polypeptide reads, in one-letter code: Spermidine/putrescine import ATP-binding protein PotA (363 aa).

Residues 6–236 (LEIRNVTRRF…PRSRFVADFI (231 aa)) enclose the ABC transporter domain. Residue 38-45 (GPSGCGKT) participates in ATP binding.

This sequence belongs to the ABC transporter superfamily. Spermidine/putrescine importer (TC 3.A.1.11.1) family. In terms of assembly, the complex is composed of two ATP-binding proteins (PotA), two transmembrane proteins (PotB and PotC) and a solute-binding protein (PotD).

It is found in the cell inner membrane. It catalyses the reaction ATP + H2O + polyamine-[polyamine-binding protein]Side 1 = ADP + phosphate + polyamineSide 2 + [polyamine-binding protein]Side 1.. Its function is as follows. Part of the ABC transporter complex PotABCD involved in spermidine/putrescine import. Responsible for energy coupling to the transport system. The protein is Spermidine/putrescine import ATP-binding protein PotA of Pseudomonas aeruginosa (strain UCBPP-PA14).